A 335-amino-acid chain; its full sequence is MKTILAVETSCDETAVAIVNSEKQVLAQEILSQTEHKKRGGVIPEIASRAHMEHLSSLIKNSIEKSNLNFCNLDATAATSGPGLIGGLIVGTMMAKAIAHVTQKPFIAVNHLEAHVLVIRLLYEVKFPFLVLLISGGHCQFLIAQNVGKYIKLGETLDDSLGEAFDKVARMLGLSYPGGPLIEKLAKKGNGTRFKLPRAMRKRPGCNFSFSGIKTAVKNLVQELEMSEQDVCDVCASFQECISEILLDRVKNAVIMAESLNIKINDFVVTGGVAANNFLRKKLKKHINLNILFPPINLCTDNAVMVGWTGIEILQKDYIDSLNFAPRPRWELGSY.

Fe cation is bound by residues His111 and His115. Substrate-binding positions include 133–137 (LISGG), Asp166, Gly179, and Asn276. Asp301 is a binding site for Fe cation.

Belongs to the KAE1 / TsaD family. Fe(2+) serves as cofactor.

It is found in the cytoplasm. It catalyses the reaction L-threonylcarbamoyladenylate + adenosine(37) in tRNA = N(6)-L-threonylcarbamoyladenosine(37) in tRNA + AMP + H(+). Its function is as follows. Required for the formation of a threonylcarbamoyl group on adenosine at position 37 (t(6)A37) in tRNAs that read codons beginning with adenine. Is involved in the transfer of the threonylcarbamoyl moiety of threonylcarbamoyl-AMP (TC-AMP) to the N6 group of A37, together with TsaE and TsaB. TsaD likely plays a direct catalytic role in this reaction. The polypeptide is tRNA N6-adenosine threonylcarbamoyltransferase (Wolbachia sp. subsp. Brugia malayi (strain TRS)).